A 207-amino-acid chain; its full sequence is 2,3-bisphosphoglycerate-dependent phosphoglycerate mutase (207 aa).

Residues 10–17, 23–24, arginine 62, 89–92, lysine 100, 116–117, and 160–161 contribute to the substrate site; these read RHGQSEWN, TG, ERDY, RR, and GN. Histidine 11 serves as the catalytic Tele-phosphohistidine intermediate. Catalysis depends on glutamate 89, which acts as the Proton donor/acceptor.

This sequence belongs to the phosphoglycerate mutase family. BPG-dependent PGAM subfamily. Homodimer.

The enzyme catalyses (2R)-2-phosphoglycerate = (2R)-3-phosphoglycerate. The protein operates within carbohydrate degradation; glycolysis; pyruvate from D-glyceraldehyde 3-phosphate: step 3/5. Its function is as follows. Catalyzes the interconversion of 2-phosphoglycerate and 3-phosphoglycerate. This Nitrobacter winogradskyi (strain ATCC 25391 / DSM 10237 / CIP 104748 / NCIMB 11846 / Nb-255) protein is 2,3-bisphosphoglycerate-dependent phosphoglycerate mutase.